We begin with the raw amino-acid sequence, 317 residues long: Melanocyte-stimulating hormone receptor (317 aa).

Polar residues predominate over residues 1-20 (MPVQGSQRSLLGAVNSTPTA). Residues 1-23 (MPVQGSQRSLLGAVNSTPTATPH) are disordered. Topologically, residues 1 to 37 (MPVQGSQRSLLGAVNSTPTATPHLRPAANQTGPQCLE) are extracellular. An N-linked (GlcNAc...) asparagine glycan is attached at asparagine 29. Residues 38–63 (VSIPDGLFLCLGLVSLVENTLVVAAI) traverse the membrane as a helical segment. Residues 64–72 (AKNRNLHSP) are Cytoplasmic-facing. Residues 73–93 (MYCFICCLALSDLLVSVSSVL) form a helical membrane-spanning segment. Topologically, residues 94 to 118 (ETAVLLLLGAGALAAQATVVQQLGN) are extracellular. A helical membrane pass occupies residues 119 to 140 (VIDVLLCSSMVSSLFFLGAIAM). Residues 141–163 (DRYISIFYALRYHSIVTLARARR) lie on the Cytoplasmic side of the membrane. The helical transmembrane segment at 164–183 (AIAAIWAASILSSTLFIAYC) threads the bilayer. The Extracellular segment spans residues 184–191 (DRTAALLC). Residues 192 to 211 (LVVFFLAMLVLMAVLYVHML) traverse the membrane as a helical segment. Residues 212 to 240 (TQARQHAQGIARLHKRQRPVQQGWGLKGA) are Cytoplasmic-facing. A helical transmembrane segment spans residues 241 to 266 (ATLTILLGVFFLCWGPFFLHLTLIAV). Residues 267–279 (CPQHPTCSCIFKN) are Extracellular-facing. The helical transmembrane segment at 280-300 (FRLFLALIVCNAIVDPLIYAF) threads the bilayer. The Cytoplasmic portion of the chain corresponds to 301–317 (RSQELRKTLKEVLLFFW).

This sequence belongs to the G-protein coupled receptor 1 family. As to quaternary structure, interacts with MGRN1, but does not undergo MGRN1-mediated ubiquitination; this interaction competes with GNAS-binding and thus inhibits agonist-induced cAMP production. Interacts with OPN3; the interaction results in a decrease in MC1R-mediated cAMP signaling and ultimately a decrease in melanin production in melanocytes.

Its subcellular location is the cell membrane. Receptor for MSH (alpha, beta and gamma) and ACTH. The activity of this receptor is mediated by G proteins which activate adenylate cyclase. Mediates melanogenesis, the production of eumelanin (black/brown) and phaeomelanin (red/yellow), via regulation of cAMP signaling in melanocytes. In Lemur catta (Ring-tailed lemur), this protein is Melanocyte-stimulating hormone receptor (MC1R).